We begin with the raw amino-acid sequence, 65 residues long: Beta-defensin 17 (65 aa).

Positions 1–19 are cleaved as a signal peptide; it reads MKFHLLFFILLFSITILTG. 3 disulfide bridges follow: Cys35-Cys63, Cys42-Cys56, and Cys46-Cys64.

The protein belongs to the beta-defensin family.

It localises to the secreted. Functionally, has antibacterial activity. This is Beta-defensin 17 (Defb17) from Rattus norvegicus (Rat).